An 840-amino-acid chain; its full sequence is Lon protease homolog 2, peroxisomal (840 aa).

In terms of domain architecture, Lon N-terminal spans 13–222; it reads LPLLCTHDGV…KALPLLTRQI (210 aa). Residue 375 to 382 coordinates ATP; sequence GPPGVGKT. Residues 583 to 606 are disordered; sequence QKVSRSEAPTEQHAEQNTDSKVED. Residues 584 to 606 are compositionally biased toward basic and acidic residues; the sequence is KVSRSEAPTEQHAEQNTDSKVED. Residues 641-825 enclose the Lon proteolytic domain; that stretch reads LTLPGVAIGL…DEVLNAAFDG (185 aa). Residues serine 731 and lysine 774 contribute to the active site. The Microbody targeting signal motif lies at 838-840; that stretch reads SKL.

Belongs to the peptidase S16 family.

Its subcellular location is the peroxisome matrix. It carries out the reaction Hydrolysis of proteins in presence of ATP.. In terms of biological role, ATP-dependent serine protease that mediates the selective degradation of misfolded and unassembled polypeptides in the peroxisomal matrix. Necessary for type 2 peroxisome targeting signal (PTS2)-containing protein processing and facilitates peroxisome matrix protein import. In Danio rerio (Zebrafish), this protein is Lon protease homolog 2, peroxisomal (lonp2).